Reading from the N-terminus, the 264-residue chain is ATP synthase subunit a (264 aa).

6 consecutive transmembrane segments (helical) span residues 29 to 49 (TWHI…LWIF), 87 to 107 (NALI…MNFM), 134 to 154 (DVNI…YYSI), 177 to 197 (IPVN…SLAL), 208 to 228 (LIFI…SLGV), and 235 to 255 (LIFH…LTIV).

Belongs to the ATPase A chain family. In terms of assembly, F-type ATPases have 2 components, CF(1) - the catalytic core - and CF(0) - the membrane proton channel. CF(1) has five subunits: alpha(3), beta(3), gamma(1), delta(1), epsilon(1). CF(0) has three main subunits: a(1), b(2) and c(9-12). The alpha and beta chains form an alternating ring which encloses part of the gamma chain. CF(1) is attached to CF(0) by a central stalk formed by the gamma and epsilon chains, while a peripheral stalk is formed by the delta and b chains.

It localises to the cell inner membrane. Functionally, key component of the proton channel; it plays a direct role in the translocation of protons across the membrane. The polypeptide is ATP synthase subunit a (Shewanella sp. (strain ANA-3)).